Here is a 134-residue protein sequence, read N- to C-terminus: Small ribosomal subunit protein uS8c (134 aa).

The protein belongs to the universal ribosomal protein uS8 family. In terms of assembly, part of the 30S ribosomal subunit.

Its subcellular location is the plastid. It is found in the chloroplast. Functionally, one of the primary rRNA binding proteins, it binds directly to 16S rRNA central domain where it helps coordinate assembly of the platform of the 30S subunit. In Vitis vinifera (Grape), this protein is Small ribosomal subunit protein uS8c (rps8).